Reading from the N-terminus, the 420-residue chain is Tol-Pal system protein TolB (420 aa).

The first 21 residues, 1 to 21, serve as a signal peptide directing secretion; the sequence is MKLFVHLVLFISLFIPYFTKA.

Belongs to the TolB family. As to quaternary structure, the Tol-Pal system is composed of five core proteins: the inner membrane proteins TolA, TolQ and TolR, the periplasmic protein TolB and the outer membrane protein Pal. They form a network linking the inner and outer membranes and the peptidoglycan layer.

It is found in the periplasm. Its function is as follows. Part of the Tol-Pal system, which plays a role in outer membrane invagination during cell division and is important for maintaining outer membrane integrity. The protein is Tol-Pal system protein TolB of Wolbachia pipientis wMel.